Consider the following 217-residue polypeptide: Adenylate kinase (217 aa).

Residue 10–15 (GAGKGT) participates in ATP binding. The tract at residues 30–59 (STGDMLRAAVKAGTPLGLEAKKVMDSGGLV) is NMP. AMP contacts are provided by residues T31, R36, 57–59 (GLV), 85–88 (GFPR), and Q92. The tract at residues 122–159 (GRRVHVASGRTYHVKFNPPKVAGVDDVTGEPLIQRDDD) is LID. Residues R123 and 132–133 (TY) each bind ATP. Residues R156 and R167 each contribute to the AMP site. ATP is bound at residue G203.

This sequence belongs to the adenylate kinase family. Monomer.

It is found in the cytoplasm. The enzyme catalyses AMP + ATP = 2 ADP. Its pathway is purine metabolism; AMP biosynthesis via salvage pathway; AMP from ADP: step 1/1. Catalyzes the reversible transfer of the terminal phosphate group between ATP and AMP. Plays an important role in cellular energy homeostasis and in adenine nucleotide metabolism. In Methylibium petroleiphilum (strain ATCC BAA-1232 / LMG 22953 / PM1), this protein is Adenylate kinase.